Consider the following 303-residue polypeptide: Nucleotide-binding protein Dvul_1502 (303 aa).

23 to 30 provides a ligand contact to ATP; it reads GLSGAGKS. 75–78 is a GTP binding site; that stretch reads DLRE.

This sequence belongs to the RapZ-like family.

Its function is as follows. Displays ATPase and GTPase activities. This chain is Nucleotide-binding protein Dvul_1502, found in Nitratidesulfovibrio vulgaris (strain DP4) (Desulfovibrio vulgaris).